A 73-amino-acid polypeptide reads, in one-letter code: Protein SlyX homolog (73 aa).

This sequence belongs to the SlyX family.

This is Protein SlyX homolog from Haemophilus influenzae (strain PittEE).